We begin with the raw amino-acid sequence, 100 residues long: Small ribosomal subunit protein uS14c (100 aa).

The protein belongs to the universal ribosomal protein uS14 family. In terms of assembly, part of the 30S ribosomal subunit.

Its subcellular location is the plastid. It is found in the chloroplast. Functionally, binds 16S rRNA, required for the assembly of 30S particles. The sequence is that of Small ribosomal subunit protein uS14c from Porphyra purpurea (Red seaweed).